The primary structure comprises 256 residues: Photosystem I chlorophyll a/b-binding protein 5, chloroplastic (256 aa).

The N-terminal 32 residues, 1–32, are a transit peptide targeting the chloroplast; it reads MAVVLRGGITGGFLHHRRDASSVITRRISSVK. Alanine 33 bears the N-acetylalanine mark. Tryptophan 49 serves as a coordination point for chlorophyll b. The chlorophyll a site is built by phenylalanine 69 and glutamate 88. Arginine 93 lines the chlorophyll b pocket. Transmembrane regions (helical) follow at residues 94 to 113 and 129 to 146; these read FAML…TTGI and FAST…MGFA. 2 residues coordinate chlorophyll b: glutamate 147 and arginine 150. The chlorophyll a site is built by lysine 205, glutamate 206, asparagine 209, arginine 211, glutamine 223, and histidine 238. A helical transmembrane segment spans residues 212–232; the sequence is LAMMAMLGFFVQASVTHTGPI.

The protein belongs to the light-harvesting chlorophyll a/b-binding (LHC) protein family. The LHC complex consists of chlorophyll a-b binding proteins. Homodimer. Heterodimer with LHCA2 and, possibly, LHCA3. Can substitute to LHCA4 to form a complex with LHCA1. Binds pigments. Element of the NAD(P)H dehydrogenase-photosystem I supercomplex (NDH-PSI). The cofactor is Binds at least 14 chlorophylls (8 Chl-a and 6 Chl-b) and carotenoids such as lutein and neoxanthin.. In terms of processing, photoregulated by reversible phosphorylation of its threonine residues.

It is found in the plastid. Its subcellular location is the chloroplast thylakoid membrane. Functionally, the light-harvesting complex (LHC) functions as a light receptor, it captures and delivers excitation energy to photosystems with which it is closely associated. Seems involved in the function of the photosystem I in low light conditions, when other LHCA proteins are less abundant. Required, together with LHCA6, for the formation of a full-size NAD(P)H dehydrogenase-photosystem I supercomplex (NDH-PSI) that triggers cyclic and chlororespiratory electron transport in chloroplast thylakoids, especially under stress conditions (e.g. increased light intensity). This chain is Photosystem I chlorophyll a/b-binding protein 5, chloroplastic, found in Arabidopsis thaliana (Mouse-ear cress).